A 182-amino-acid chain; its full sequence is Adenine phosphoribosyltransferase (182 aa).

The protein belongs to the purine/pyrimidine phosphoribosyltransferase family. Homodimer.

The protein resides in the cytoplasm. It carries out the reaction AMP + diphosphate = 5-phospho-alpha-D-ribose 1-diphosphate + adenine. The protein operates within purine metabolism; AMP biosynthesis via salvage pathway; AMP from adenine: step 1/1. Catalyzes a salvage reaction resulting in the formation of AMP, that is energically less costly than de novo synthesis. The sequence is that of Adenine phosphoribosyltransferase from Bordetella pertussis (strain Tohama I / ATCC BAA-589 / NCTC 13251).